Here is a 412-residue protein sequence, read N- to C-terminus: 4-hydroxy-3-methylbut-2-en-1-yl diphosphate synthase (ferredoxin) (412 aa).

Over residues 1 to 12 the composition is skewed to polar residues; sequence MQTLDRPNAPSQ. The tract at residues 1–22 is disordered; sequence MQTLDRPNAPSQQPYPEPVYPR. [4Fe-4S] cluster-binding residues include Cys-314, Cys-317, Cys-348, and Glu-355.

The protein belongs to the IspG family. It depends on [4Fe-4S] cluster as a cofactor.

It catalyses the reaction (2E)-4-hydroxy-3-methylbut-2-enyl diphosphate + 2 oxidized [2Fe-2S]-[ferredoxin] + H2O = 2-C-methyl-D-erythritol 2,4-cyclic diphosphate + 2 reduced [2Fe-2S]-[ferredoxin] + H(+). It participates in isoprenoid biosynthesis; isopentenyl diphosphate biosynthesis via DXP pathway; isopentenyl diphosphate from 1-deoxy-D-xylulose 5-phosphate: step 5/6. Converts 2C-methyl-D-erythritol 2,4-cyclodiphosphate (ME-2,4cPP) into 1-hydroxy-2-methyl-2-(E)-butenyl 4-diphosphate. The sequence is that of 4-hydroxy-3-methylbut-2-en-1-yl diphosphate synthase (ferredoxin) from Synechococcus sp. (strain JA-3-3Ab) (Cyanobacteria bacterium Yellowstone A-Prime).